Reading from the N-terminus, the 451-residue chain is Phosphoglucosamine mutase (451 aa).

S107 serves as the catalytic Phosphoserine intermediate. Mg(2+) contacts are provided by S107, D246, D248, and D250. S107 is modified (phosphoserine).

It belongs to the phosphohexose mutase family. The cofactor is Mg(2+). Post-translationally, activated by phosphorylation.

The catalysed reaction is alpha-D-glucosamine 1-phosphate = D-glucosamine 6-phosphate. Its function is as follows. Catalyzes the conversion of glucosamine-6-phosphate to glucosamine-1-phosphate. The chain is Phosphoglucosamine mutase from Burkholderia ambifaria (strain ATCC BAA-244 / DSM 16087 / CCUG 44356 / LMG 19182 / AMMD) (Burkholderia cepacia (strain AMMD)).